The following is a 312-amino-acid chain: Pre-mRNA-splicing factor 38A (312 aa).

The segment at Met1–Pro179 is N-terminal protein interaction domain. Phosphoserine occurs at positions 11, 193, 194, 209, and 226. Positions Val170–Leu204 form a coiled coil. The tract at residues Val181 to Glu312 is disordered. The span at Leu184–Glu202 shows a compositional bias: acidic residues. Basic and acidic residues predominate over residues Lys203–Arg224. Composition is skewed to basic residues over residues Arg225–Ser294 and Lys301–Glu312.

The protein belongs to the PRP38 family. Component of the spliceosome B complex. Interacts (via N-terminal interaction domain) with ZMAT2 and MFAP1.

The protein localises to the nucleus. In terms of biological role, involved in pre-mRNA splicing as a component of the spliceosome. This is Pre-mRNA-splicing factor 38A (Prpf38a) from Mus musculus (Mouse).